The primary structure comprises 65 residues: Putative cytochrome c oxidase subunit 5C-4 (65 aa).

A helical membrane pass occupies residues 20–37 (EIIYGITLGFAVGGLWKM).

This sequence belongs to the cytochrome c oxidase subunit 5C family.

The protein resides in the mitochondrion inner membrane. This protein is one of the nuclear-coded polypeptide chains of cytochrome c oxidase, the terminal oxidase in mitochondrial electron transport. In Arabidopsis thaliana (Mouse-ear cress), this protein is Putative cytochrome c oxidase subunit 5C-4.